Consider the following 85-residue polypeptide: Large ribosomal subunit protein bL27 (85 aa).

The disordered stretch occupies residues 1–25 (MAHKKGVGSSRNGRDSNPKMLGVKR).

It belongs to the bacterial ribosomal protein bL27 family.

The polypeptide is Large ribosomal subunit protein bL27 (Roseiflexus castenholzii (strain DSM 13941 / HLO8)).